Reading from the N-terminus, the 328-residue chain is MAAGIVASRRLRDLLTRRLTGSNYPGLSISLRLTGSSAQEEASGVALGEAPDHSYESLRVTSAQKHVLHVQLNRPNKRNAMNKVFWREMVECFNKISRDADCRAVVISGAGKMFTAGIDLMDMASDILQPKGDDVARISWYLRDIITRYQETFNVIERCPKPVIAAVHGGCIGGGVDLVTACDIRYCAQDAFFQVKEVDVGLAADVGTLQRLPKVIGNQSLVNELAFTARKMMADEALGSGLVSRVFPDKEVMLDAALALAAEISSKSPVAVQSTKVNLLYSRDHSVAESLNYVASWNMSMLQTQDLVKSVQATTENKELKTVTFSKL.

The transit peptide at 1–33 (MAAGIVASRRLRDLLTRRLTGSNYPGLSISLRL) directs the protein to the mitochondrion. Substrate-binding positions include 116–120 (AGIDL) and glycine 174. At lysine 231 the chain carries N6-succinyllysine. Phosphoserine is present on serine 268. Residues 326 to 328 (SKL) carry the Microbody targeting signal motif. Lysine 327 is subject to N6-acetyllysine.

Belongs to the enoyl-CoA hydratase/isomerase family. In terms of assembly, homohexamer.

The protein resides in the mitochondrion. Its subcellular location is the peroxisome. The enzyme catalyses (3E,5Z)-octadienoyl-CoA = (2E,4E)-octadienoyl-CoA. The catalysed reaction is (3E,5Z,8Z,11Z,14Z)-eicosapentaenoyl-CoA = (2E,4E,8Z,11Z,14Z)-eicosapentaenoyl-CoA. The protein operates within lipid metabolism; fatty acid beta-oxidation. Its function is as follows. Isomerization of 3-trans,5-cis-dienoyl-CoA to 2-trans,4-trans-dienoyl-CoA. The chain is Delta(3,5)-Delta(2,4)-dienoyl-CoA isomerase, mitochondrial from Homo sapiens (Human).